The chain runs to 117 residues: Immunoglobulin kappa variable 1D-43 (117 aa).

The N-terminal stretch at 1-22 (MDMRVPAQRLGLLLLWFPGARC) is a signal peptide. The interval 23–45 (AIRMTQSPFSLSASVGDRVTITC) is framework-1. Positions 23–117 (AIRMTQSPFS…YYCQQYYSTP (95 aa)) constitute an Ig-like domain. C45 and C110 form a disulfide bridge. Residues 46 to 56 (WASQGISSYLA) are complementarity-determining-1. The tract at residues 57–71 (WYQQKPAKAPKLFIY) is framework-2. The complementarity-determining-2 stretch occupies residues 72 to 78 (YASSLQS). A framework-3 region spans residues 79-110 (GVPSRFSGSGSGTDYTLTISSLQPEDFATYYC). The interval 111–117 (QQYYSTP) is complementarity-determining-3.

As to quaternary structure, immunoglobulins are composed of two identical heavy chains and two identical light chains; disulfide-linked.

Its subcellular location is the secreted. It localises to the cell membrane. In terms of biological role, v region of the variable domain of immunoglobulin light chains that participates in the antigen recognition. Immunoglobulins, also known as antibodies, are membrane-bound or secreted glycoproteins produced by B lymphocytes. In the recognition phase of humoral immunity, the membrane-bound immunoglobulins serve as receptors which, upon binding of a specific antigen, trigger the clonal expansion and differentiation of B lymphocytes into immunoglobulins-secreting plasma cells. Secreted immunoglobulins mediate the effector phase of humoral immunity, which results in the elimination of bound antigens. The antigen binding site is formed by the variable domain of one heavy chain, together with that of its associated light chain. Thus, each immunoglobulin has two antigen binding sites with remarkable affinity for a particular antigen. The variable domains are assembled by a process called V-(D)-J rearrangement and can then be subjected to somatic hypermutations which, after exposure to antigen and selection, allow affinity maturation for a particular antigen. This chain is Immunoglobulin kappa variable 1D-43, found in Homo sapiens (Human).